We begin with the raw amino-acid sequence, 205 residues long: Microtubule-associated protein Jupiter (205 aa).

Ser-30 bears the Phosphoserine mark. Residues Thr-41, Thr-98, and Thr-102 each carry the phosphothreonine modification. The span at 124 to 135 (LISNSKGNYNGK) shows a compositional bias: polar residues. Positions 124–205 (LISNSKGNYN…PPGGYSSGLW (82 aa)) are disordered. Low complexity predominate over residues 136–149 (SGSVSSASSSVSSS). Phosphoserine occurs at positions 138 and 149. Over residues 181–191 (PANNGSSQVIN) the composition is skewed to polar residues.

This sequence belongs to the MAP Jupiter family.

It localises to the nucleus. Its subcellular location is the cytoplasm. The protein localises to the cytoskeleton. It is found in the spindle. Its function is as follows. Binds to all microtubule populations. In Drosophila virilis (Fruit fly), this protein is Microtubule-associated protein Jupiter.